A 524-amino-acid chain; its full sequence is MTEDKITGTLVFAVLTAVLGSFQFGYDIGVINAPQQVIITHYRHVLGVPLDDRKAINSYAINSTEELPTGPYPGDPTPTSWAEEETTASASLIIMLWSLSVSIFAIGGMIASFFGGMLGDRLGRIKAMLVANILSLVGALLMWFSKLGPSHILIISGRGISGLYCGLISGLVPMYIGEIAPTKFRGAIGALHQLAIVTGILVSQIIGLDFLLGNHELWHILLGLSAVPAVLQSLMLFFCPESPRYLYIKLDEEAKARKSLKKLRGSDDVTKDITEMRKEREEASSEKKVSIIQLFTNSSYRQPILVALMLHMAQQFSGINGIFYYSTSIFQTAGISQPVYATIGVGAINTIFTALSVFLVEKAGRRSLFLIGMSGMFVCAIFMSVGLVLLDKLPWMSYVSMTAIFLFVSFFEIGPGPIPWFMVAEFFSQGPRPAALAMAAFSNWTCNFIIALCFQYIADFCGPYVFFLFAGVVLVFTLFTFFKVPETKGKSFEEIAAEFQKKSGSAQSPKAAVEMEFLGATETV.

The Cytoplasmic portion of the chain corresponds to Met-1–Ile-6. The helical transmembrane segment at Thr-7–Tyr-26 threads the bilayer. Residues Asp-27–Ser-89 are Extracellular-facing. N-linked (GlcNAc...) asparagine glycosylation occurs at Asn-62. A helical membrane pass occupies residues Ala-90–Gly-115. Topologically, residues Gly-116–Lys-126 are cytoplasmic. The chain crosses the membrane as a helical span at residues Ala-127 to Ser-145. Topologically, residues Lys-146–Ser-150 are extracellular. The helical transmembrane segment at His-151 to Ile-176 threads the bilayer. Residues Gly-177–Ala-187 are Cytoplasmic-facing. Residues Ile-188–Leu-211 traverse the membrane as a helical segment. Residue Gln-193 coordinates D-glucose. Over Leu-212–Glu-216 the chain is Extracellular. The chain crosses the membrane as a helical span at residues Leu-217–Cys-239. Residues Pro-240–Pro-303 are Cytoplasmic-facing. A helical membrane pass occupies residues Ile-304–Thr-327. D-glucose is bound by residues Gln-314 to Gln-315 and Asn-320. The Extracellular segment spans residues Ser-328–Pro-338. Residues Val-339 to Val-360 form a helical membrane-spanning segment. Residue Asn-349 participates in D-glucose binding. Residues Glu-361–Arg-366 are Cytoplasmic-facing. Residues Ser-367–Leu-389 form a helical membrane-spanning segment. The Extracellular segment spans residues Leu-390–Pro-394. Residues Trp-395 to Ile-413 traverse the membrane as a helical segment. 2 residues coordinate D-glucose: Glu-412 and Trp-420. Over Gly-414–Pro-433 the chain is Cytoplasmic. The chain crosses the membrane as a helical span at residues Ala-434–Ala-458. Residues Asp-459–Pro-463 are Extracellular-facing. The chain crosses the membrane as a helical span at residues Tyr-464–Phe-482. Topologically, residues Lys-483 to Val-524 are cytoplasmic. Phosphothreonine is present on Thr-523.

Belongs to the major facilitator superfamily. Sugar transporter (TC 2.A.1.1) family. Glucose transporter subfamily. In terms of processing, N-glycosylated; required for stability and retention at the cell surface of pancreatic beta cells.

Its subcellular location is the cell membrane. It carries out the reaction D-glucose(out) = D-glucose(in). The enzyme catalyses D-fructose(out) = D-fructose(in). The catalysed reaction is L-dehydroascorbate(out) = L-dehydroascorbate(in). It catalyses the reaction D-galactose(in) = D-galactose(out). D-glucose and maltose competitively inhibit fructose transport. D-glucose, D-fructose and maltose inhibit deoxyglucose transport. In terms of biological role, facilitative hexose transporter that mediates the transport of glucose, fructose and galactose. Likely mediates the bidirectional transfer of glucose across the plasma membrane of hepatocytes and is responsible for uptake of glucose by the beta cells; may comprise part of the glucose-sensing mechanism of the beta cell. May also participate with the Na(+)/glucose cotransporter in the transcellular transport of glucose in the small intestine and kidney. Also able to mediate the transport of dehydroascorbate. In Sus scrofa (Pig), this protein is Solute carrier family 2, facilitated glucose transporter member 2.